Reading from the N-terminus, the 332-residue chain is Long form salivary protein D7L2 (332 aa).

Residues 1 to 21 (MFPPRKFLLSSFILAALHVTA) form the signal peptide. Cystine bridges form between C40–C77 and C73–C133. W61 contributes to the leukotriene E4 binding site. Leukotriene E4 contacts are provided by G157 and K176. 3 cysteine pairs are disulfide-bonded: C184-C219, C200-C331, and C259-C278. Noradrenaline is bound by residues E185, R203, and H216. Noradrenaline is bound by residues D294 and E297.

Belongs to the PBP/GOBP family. Interacts with human CD4. Saliva (at protein level). Female salivary gland (at protein level). Detected in the head and thorax of the female mosquitoes, where the salivary glands are located.

It localises to the secreted. Functionally, modulates blood feeding of female mosquitoes on vertebrate species by binding and sequestering different mediators involved in the host response, such as biogenic amines and eicosanoids. Binds serotonin, histamine, tryptamine, noradrenaline, leukotriene B4, leukotriene C4, leukotriene D4, leukotriene E4 and U-46619, a stable analog of thromboxane A2. Does not bind adrenaline. Exhibits vasodilating activity. Inhibits agonist-induced platelet aggregation but not blood clotting. (Microbial infection) Probably promotes Plasmodium gallinaceum oocyst development in mosquito midgut. The sequence is that of Long form salivary protein D7L2 from Aedes aegypti (Yellowfever mosquito).